The primary structure comprises 349 residues: N-acetyl-gamma-glutamyl-phosphate reductase (349 aa).

Cys-149 is a catalytic residue.

The protein belongs to the NAGSA dehydrogenase family. Type 1 subfamily.

It localises to the cytoplasm. It catalyses the reaction N-acetyl-L-glutamate 5-semialdehyde + phosphate + NADP(+) = N-acetyl-L-glutamyl 5-phosphate + NADPH + H(+). It functions in the pathway amino-acid biosynthesis; L-arginine biosynthesis; N(2)-acetyl-L-ornithine from L-glutamate: step 3/4. Functionally, catalyzes the NADPH-dependent reduction of N-acetyl-5-glutamyl phosphate to yield N-acetyl-L-glutamate 5-semialdehyde. This is N-acetyl-gamma-glutamyl-phosphate reductase from Acinetobacter baumannii (strain AB307-0294).